A 152-amino-acid polypeptide reads, in one-letter code: 1,4-dihydroxy-2-naphthoyl-CoA hydrolase (152 aa).

Aspartate 20 is a catalytic residue.

The protein belongs to the 4-hydroxybenzoyl-CoA thioesterase family. DHNA-CoA hydrolase subfamily.

It catalyses the reaction 1,4-dihydroxy-2-naphthoyl-CoA + H2O = 1,4-dihydroxy-2-naphthoate + CoA + H(+). The protein operates within cofactor biosynthesis; phylloquinone biosynthesis. Its pathway is quinol/quinone metabolism; 1,4-dihydroxy-2-naphthoate biosynthesis; 1,4-dihydroxy-2-naphthoate from chorismate: step 7/7. Its function is as follows. Catalyzes the hydrolysis of 1,4-dihydroxy-2-naphthoyl-CoA (DHNA-CoA) to 1,4-dihydroxy-2-naphthoate (DHNA), a reaction involved in phylloquinone (vitamin K1) biosynthesis. This Parasynechococcus marenigrum (strain WH8102) protein is 1,4-dihydroxy-2-naphthoyl-CoA hydrolase.